A 166-amino-acid chain; its full sequence is Phosphopantetheine adenylyltransferase (166 aa).

Residue Ser9 coordinates substrate. ATP-binding positions include 9 to 10 (SF) and His17. 3 residues coordinate substrate: Lys41, Leu74, and Lys88. ATP contacts are provided by residues 89–91 (GLR), Glu99, and 123–129 (YIHLSST).

The protein belongs to the bacterial CoaD family. As to quaternary structure, homohexamer. It depends on Mg(2+) as a cofactor.

It is found in the cytoplasm. The catalysed reaction is (R)-4'-phosphopantetheine + ATP + H(+) = 3'-dephospho-CoA + diphosphate. It functions in the pathway cofactor biosynthesis; coenzyme A biosynthesis; CoA from (R)-pantothenate: step 4/5. Reversibly transfers an adenylyl group from ATP to 4'-phosphopantetheine, yielding dephospho-CoA (dPCoA) and pyrophosphate. This is Phosphopantetheine adenylyltransferase from Pseudarthrobacter chlorophenolicus (strain ATCC 700700 / DSM 12829 / CIP 107037 / JCM 12360 / KCTC 9906 / NCIMB 13794 / A6) (Arthrobacter chlorophenolicus).